The following is a 1026-amino-acid chain: Multidrug resistance protein MdtC (1026 aa).

The next 11 membrane-spanning stretches (helical) occupy residues 15–35, 333–353, 360–380, 387–407, 431–451, 463–483, 528–548, 853–873, 897–917, 953–973, and 984–1004; these read ILIAAAITLCGILGFRLLPVA, EVEETLAISVALVILVVFLFL, LIPAVAVPVSLISTFAAMYLC, LSLMALTIATGFVVDDAIVVL, VGFTVISMSLSLVAVFLPLLL, FAVTLSVAIGISLVVSLTLTP, LVGVVFLGTIALNIWLYIAIP, LILIMAAIATVYIVLGILYES, LFNAPFSLIALIGIMLLIGIV, PIMMTTLAAMFGALPLVLSGG, and ITIVGGLVMSQLLTLYTTPVV.

This sequence belongs to the resistance-nodulation-cell division (RND) (TC 2.A.6) family. MdtC subfamily. As to quaternary structure, part of a tripartite efflux system composed of MdtA, MdtB and MdtC. MdtC forms a heteromultimer with MdtB.

The protein resides in the cell inner membrane. In Salmonella arizonae (strain ATCC BAA-731 / CDC346-86 / RSK2980), this protein is Multidrug resistance protein MdtC.